A 78-amino-acid chain; its full sequence is Acyl carrier protein (78 aa).

Residues 2 to 77 form the Carrier domain; sequence SDTAERIKKI…DAVSYIDEHK (76 aa). S37 is modified (O-(pantetheine 4'-phosphoryl)serine).

It belongs to the acyl carrier protein (ACP) family. In terms of processing, 4'-phosphopantetheine is transferred from CoA to a specific serine of apo-ACP by AcpS. This modification is essential for activity because fatty acids are bound in thioester linkage to the sulfhydryl of the prosthetic group.

It is found in the cytoplasm. It participates in lipid metabolism; fatty acid biosynthesis. In terms of biological role, carrier of the growing fatty acid chain in fatty acid biosynthesis. The polypeptide is Acyl carrier protein (Zymomonas mobilis subsp. mobilis (strain ATCC 31821 / ZM4 / CP4)).